The chain runs to 588 residues: Sentrin-specific protease 2 (588 aa).

Positions 28–31 (KRRR) match the Nuclear localization signal motif. Serine 32 is subject to Phosphoserine. The short motif at 47–52 (PAKRPR) is the Nuclear localization signal element. An axin-binding region spans residues 72-381 (GFPFQLTTKP…EKEISNALGH (310 aa)). A disordered region spans residues 157–184 (EGYNRRPSGRRHSKSNPESSLPWKPQEQ). A Nuclear export signal motif is present at residues 316–331 (LEPDLSEEVSARLRLG). Serine 332 and serine 343 each carry phosphoserine. Residues 394–558 (LRITRGDIQT…MFTCKYADYI (165 aa)) form a protease region. Catalysis depends on residues histidine 477 and aspartate 494. The active-site Nucleophile is the cysteine 547.

It belongs to the peptidase C48 family. As to quaternary structure, binds to SUMO2 and SUMO3. Interacts with the C-terminal domain of NUP153 via its N-terminus. Interacts with MTA1. Binds to AXIN1. Post-translationally, polyubiquitinated; which leads to proteasomal degradation. In terms of tissue distribution, ubiquitous. Highly expressed in brain, lung and testis.

The protein resides in the nucleus. The protein localises to the nuclear pore complex. Its subcellular location is the nucleus membrane. It is found in the cytoplasm. Functionally, protease that catalyzes two essential functions in the SUMO pathway. The first is the hydrolysis of an alpha-linked peptide bond at the C-terminal end of the small ubiquitin-like modifier (SUMO) propeptides, SUMO1, SUMO2 and SUMO3 leading to the mature form of the proteins. The second is the deconjugation of SUMO1, SUMO2 and SUMO3 from targeted proteins, by cleaving an epsilon-linked peptide bond between the C-terminal glycine of the mature SUMO and the lysine epsilon-amino group of the target protein. May down-regulate CTNNB1 levels and thereby modulate the Wnt pathway. Deconjugates SUMO2 from MTA1. Plays a dynamic role in adipogenesis by desumoylating and promoting the stabilization of CEBPB. Acts as a regulator of the cGAS-STING pathway by catalyzing desumoylation of CGAS and STING1 during the late phase of viral infection. This Rattus norvegicus (Rat) protein is Sentrin-specific protease 2 (Senp2).